The chain runs to 113 residues: Hydrogenase maturation factor HypA (113 aa).

Position 2 (His2) interacts with Ni(2+). Zn(2+) contacts are provided by Cys73, Cys76, Cys89, and Cys92.

This sequence belongs to the HypA/HybF family.

Involved in the maturation of [NiFe] hydrogenases. Required for nickel insertion into the metal center of the hydrogenase. This is Hydrogenase maturation factor HypA from Aeromonas hydrophila subsp. hydrophila (strain ATCC 7966 / DSM 30187 / BCRC 13018 / CCUG 14551 / JCM 1027 / KCTC 2358 / NCIMB 9240 / NCTC 8049).